A 234-amino-acid polypeptide reads, in one-letter code: Bradykinin-releasing enzyme KR-E-1 (234 aa).

The 225-residue stretch at 1–225 (VIGGDECNIN…YSDWIQSIIA (225 aa)) folds into the Peptidase S1 domain. 6 disulfides stabilise this stretch: cysteine 7-cysteine 139, cysteine 26-cysteine 42, cysteine 74-cysteine 232, cysteine 118-cysteine 186, cysteine 150-cysteine 165, and cysteine 176-cysteine 201. Asparagine 20 carries N-linked (GlcNAc...) asparagine glycosylation. Catalysis depends on charge relay system residues histidine 41 and aspartate 86. Serine 180 (charge relay system) is an active-site residue.

Belongs to the peptidase S1 family. Snake venom subfamily. As to quaternary structure, monomer. As to expression, expressed by the venom gland.

Its subcellular location is the secreted. In terms of biological role, bradykinin-releasing enzyme. Releases bradykinin from bovine HMW kininogen. Has anticoagulant activity. Increases permeability of capillaries by intradermal injection into rabbits. The chain is Bradykinin-releasing enzyme KR-E-1 from Gloydius ussuriensis (Ussuri mamushi).